A 205-amino-acid polypeptide reads, in one-letter code: ATP-dependent dethiobiotin synthetase BioD (205 aa).

Mg(2+) is bound at residue T16. K32 is a catalytic residue. T36 is a binding site for substrate. Mg(2+) is bound at residue E97. 97 to 100 lines the ATP pocket; it reads EGAG.

It belongs to the dethiobiotin synthetase family. As to quaternary structure, homodimer. Mg(2+) serves as cofactor.

The protein resides in the cytoplasm. It carries out the reaction (7R,8S)-7,8-diammoniononanoate + CO2 + ATP = (4R,5S)-dethiobiotin + ADP + phosphate + 3 H(+). Its pathway is cofactor biosynthesis; biotin biosynthesis; biotin from 7,8-diaminononanoate: step 1/2. Functionally, catalyzes a mechanistically unusual reaction, the ATP-dependent insertion of CO2 between the N7 and N8 nitrogen atoms of 7,8-diaminopelargonic acid (DAPA, also called 7,8-diammoniononanoate) to form a ureido ring. The protein is ATP-dependent dethiobiotin synthetase BioD of Paramagnetospirillum magneticum (strain ATCC 700264 / AMB-1) (Magnetospirillum magneticum).